A 277-amino-acid chain; its full sequence is Putative phosphoenolpyruvate synthase regulatory protein (277 aa).

An ADP-binding site is contributed by 157 to 164; it reads GVSRCGKT.

It belongs to the pyruvate, phosphate/water dikinase regulatory protein family. PSRP subfamily.

The enzyme catalyses [pyruvate, water dikinase] + ADP = [pyruvate, water dikinase]-phosphate + AMP + H(+). It carries out the reaction [pyruvate, water dikinase]-phosphate + phosphate + H(+) = [pyruvate, water dikinase] + diphosphate. Functionally, bifunctional serine/threonine kinase and phosphorylase involved in the regulation of the phosphoenolpyruvate synthase (PEPS) by catalyzing its phosphorylation/dephosphorylation. The sequence is that of Putative phosphoenolpyruvate synthase regulatory protein from Cronobacter sakazakii (strain ATCC BAA-894) (Enterobacter sakazakii).